We begin with the raw amino-acid sequence, 87 residues long: U3-theraphotoxin-Hhn1a 5 (87 aa).

Residues 1–24 (MVNMKASMFLTFAGLVLLFVVCYA) form the signal peptide. Positions 25 to 52 (SESEEKEFPKEMLSSIFAVDNDFKQEER) are excised as a propeptide. 3 cysteine pairs are disulfide-bonded: Cys-54-Cys-67, Cys-61-Cys-72, and Cys-66-Cys-79.

This sequence belongs to the neurotoxin 10 (Hwtx-1) family. 51 (Hntx-8) subfamily. Hntx-8 sub-subfamily. Expressed by the venom gland.

The protein localises to the secreted. Its function is as follows. Ion channel inhibitor. The chain is U3-theraphotoxin-Hhn1a 5 from Cyriopagopus hainanus (Chinese bird spider).